The sequence spans 288 residues: Bifunctional protein FolD (288 aa).

NADP(+) contacts are provided by residues 166 to 168, S191, and V232; that span reads GRS.

It belongs to the tetrahydrofolate dehydrogenase/cyclohydrolase family. In terms of assembly, homodimer.

It catalyses the reaction (6R)-5,10-methylene-5,6,7,8-tetrahydrofolate + NADP(+) = (6R)-5,10-methenyltetrahydrofolate + NADPH. The catalysed reaction is (6R)-5,10-methenyltetrahydrofolate + H2O = (6R)-10-formyltetrahydrofolate + H(+). The protein operates within one-carbon metabolism; tetrahydrofolate interconversion. Functionally, catalyzes the oxidation of 5,10-methylenetetrahydrofolate to 5,10-methenyltetrahydrofolate and then the hydrolysis of 5,10-methenyltetrahydrofolate to 10-formyltetrahydrofolate. The sequence is that of Bifunctional protein FolD from Roseiflexus castenholzii (strain DSM 13941 / HLO8).